A 490-amino-acid polypeptide reads, in one-letter code: MARFEEQKLYIGGRYVEASSGATFETINPANGEVLAKVQRASREDVERAVQSAVEGQKVWAAMTAMQRSRILRRAVDILRERNDELAALETLDTGKPLAETRSVDIVTGADVLEYYAGLVPAIEGEQIPLRETSFVYTRREPLGVVAGIGAWNYPVQIALWKSAPALAAGNAMIFKPSEVTPLTTLKLAEIYTEAGVPDGVFNVLTGSGREVGQWLTEHPLIEKISFTGGTSTGKKVMASASSSSLKEVTMELGGKSPLIIFPDADLDRAADIAVMANFFSSGQVCTNGTRVFIHRSQQARFEAKVLERVQRIRLGDPQDENTNFGPLVSFPHMESVLGYIESGKAQKARLLCGGERVTDGAFGNGAYVAPTVFTDCSDDMTIVREEIFGPVMSILVYDDEDEAIRRANDTEYGLAAGVVTQDLARAHRAIHRLEAGICWINTWGESPAEMPVGGYKQSGVGRENGLTTLAHYTRIKSVQVELGDYASVF.

3 residues coordinate K(+): T26, I27, and D93. 150–152 (GAW) is an NAD(+) binding site. Residue K162 is the Charge relay system of the active site. Residue 176–179 (KPSE) participates in NAD(+) binding. V180 contributes to the K(+) binding site. 230–233 (GTST) serves as a coordination point for NAD(+). L246 serves as a coordination point for K(+). Catalysis depends on E252, which acts as the Proton acceptor. NAD(+)-binding residues include G254, C286, and E387. Residue C286 is the Nucleophile of the active site. Cysteine sulfenic acid (-SOH) is present on C286. K(+)-binding residues include K457 and G460. The active-site Charge relay system is the E464.

The protein belongs to the aldehyde dehydrogenase family. Dimer of dimers. K(+) is required as a cofactor.

The enzyme catalyses betaine aldehyde + NAD(+) + H2O = glycine betaine + NADH + 2 H(+). It participates in amine and polyamine biosynthesis; betaine biosynthesis via choline pathway; betaine from betaine aldehyde: step 1/1. Functionally, involved in the biosynthesis of the osmoprotectant glycine betaine. Catalyzes the irreversible oxidation of betaine aldehyde to the corresponding acid. This chain is Betaine aldehyde dehydrogenase, found in Pseudomonas aeruginosa (strain UCBPP-PA14).